The chain runs to 456 residues: Bifunctional protein GlmU (456 aa).

Residues 1-229 are pyrophosphorylase; the sequence is MLNSAMSVVI…ISETDGVNNR (229 aa). Residues 11 to 14, K25, Q76, 81 to 82, 103 to 105, G140, E154, N169, and N227 contribute to the UDP-N-acetyl-alpha-D-glucosamine site; these read LAAG, GT, and YGD. A Mg(2+)-binding site is contributed by D105. N227 contributes to the Mg(2+) binding site. The segment at 230–250 is linker; the sequence is LQLSRLERIYQAEQAEKLLLS. The tract at residues 251-456 is N-acetyltransferase; sequence GVMLRDPARF…QGWQRPVKKK (206 aa). UDP-N-acetyl-alpha-D-glucosamine is bound by residues R333 and K351. Catalysis depends on H363, which acts as the Proton acceptor. Y366 and N377 together coordinate UDP-N-acetyl-alpha-D-glucosamine. Residues A380, 386 to 387, S405, A423, and R440 each bind acetyl-CoA; that span reads NY.

It in the N-terminal section; belongs to the N-acetylglucosamine-1-phosphate uridyltransferase family. In the C-terminal section; belongs to the transferase hexapeptide repeat family. In terms of assembly, homotrimer. Mg(2+) is required as a cofactor.

Its subcellular location is the cytoplasm. It carries out the reaction alpha-D-glucosamine 1-phosphate + acetyl-CoA = N-acetyl-alpha-D-glucosamine 1-phosphate + CoA + H(+). It catalyses the reaction N-acetyl-alpha-D-glucosamine 1-phosphate + UTP + H(+) = UDP-N-acetyl-alpha-D-glucosamine + diphosphate. It participates in nucleotide-sugar biosynthesis; UDP-N-acetyl-alpha-D-glucosamine biosynthesis; N-acetyl-alpha-D-glucosamine 1-phosphate from alpha-D-glucosamine 6-phosphate (route II): step 2/2. It functions in the pathway nucleotide-sugar biosynthesis; UDP-N-acetyl-alpha-D-glucosamine biosynthesis; UDP-N-acetyl-alpha-D-glucosamine from N-acetyl-alpha-D-glucosamine 1-phosphate: step 1/1. Its pathway is bacterial outer membrane biogenesis; LPS lipid A biosynthesis. Its function is as follows. Catalyzes the last two sequential reactions in the de novo biosynthetic pathway for UDP-N-acetylglucosamine (UDP-GlcNAc). The C-terminal domain catalyzes the transfer of acetyl group from acetyl coenzyme A to glucosamine-1-phosphate (GlcN-1-P) to produce N-acetylglucosamine-1-phosphate (GlcNAc-1-P), which is converted into UDP-GlcNAc by the transfer of uridine 5-monophosphate (from uridine 5-triphosphate), a reaction catalyzed by the N-terminal domain. The polypeptide is Bifunctional protein GlmU (Salmonella choleraesuis (strain SC-B67)).